Consider the following 211-residue polypeptide: NADH-quinone oxidoreductase subunit A (211 aa).

A run of 3 helical transmembrane segments spans residues 7–27, 61–81, and 88–108; these read WSAL…LVVP, FYLV…LYAY, and VGWI…IGLI.

Belongs to the complex I subunit 3 family. NDH-1 is composed of 14 different subunits. Subunits NuoA, H, J, K, L, M, N constitute the membrane sector of the complex.

It localises to the cell inner membrane. The catalysed reaction is a quinone + NADH + 5 H(+)(in) = a quinol + NAD(+) + 4 H(+)(out). NDH-1 shuttles electrons from NADH, via FMN and iron-sulfur (Fe-S) centers, to quinones in the respiratory chain. The immediate electron acceptor for the enzyme in this species is believed to be ubiquinone. Couples the redox reaction to proton translocation (for every two electrons transferred, four hydrogen ions are translocated across the cytoplasmic membrane), and thus conserves the redox energy in a proton gradient. This chain is NADH-quinone oxidoreductase subunit A, found in Psychrobacter sp. (strain PRwf-1).